A 409-amino-acid chain; its full sequence is Arginine deiminase (409 aa).

The active-site Amidino-cysteine intermediate is Cys-399.

It belongs to the arginine deiminase family.

It localises to the cytoplasm. The catalysed reaction is L-arginine + H2O = L-citrulline + NH4(+). It participates in amino-acid degradation; L-arginine degradation via ADI pathway; carbamoyl phosphate from L-arginine: step 1/2. The sequence is that of Arginine deiminase from Borrelia duttonii (strain Ly).